The following is a 299-amino-acid chain: Biotin transporter (299 aa).

The next 10 membrane-spanning stretches (helical) occupy residues 2-22 (ALLI…GEYL), 26-46 (VDSY…FLPF), 56-76 (TVGL…MLSF), 81-101 (YLTV…ITLI), 110-130 (LRWG…IIRY), 137-157 (FWTG…GMVG), 172-192 (AFAW…FLLG), 202-222 (LQWG…YFMW), 233-253 (TLGI…LAIW), and 256-276 (QPHW…LWVH). 2 consecutive EamA domains span residues 3-128 (LLII…AGII) and 139-274 (TGLL…ASLW).

Belongs to the drug/metabolite transporter (DMT) superfamily. 10 TMS drug/metabolite exporter (DME) (TC 2.A.7.3) family.

It is found in the cell inner membrane. It catalyses the reaction biotin(in) = biotin(out). Its function is as follows. Uptake of biotin. The sequence is that of Biotin transporter from Escherichia coli O157:H7.